The sequence spans 359 residues: Photosystem II protein D1 1 (359 aa).

3 consecutive transmembrane segments (helical) span residues 29–46 (YVGW…AATI), 118–133 (HFLI…EWEL), and 142–156 (WICV…AASA). Residue H118 participates in chlorophyll a binding. Y126 contributes to the pheophytin a binding site. D170 and E189 together coordinate [CaMn4O5] cluster. Residues 197 to 218 (FHMLGVAGVFGGSLFSAMHGSL) traverse the membrane as a helical segment. A chlorophyll a-binding site is contributed by H198. Residues H215 and 264-265 (SF) each bind a quinone. H215 contributes to the Fe cation binding site. Fe cation is bound at residue H272. Residues 274–288 (FLAAWPVVGIWFTAL) form a helical membrane-spanning segment. H332, E333, D342, and A344 together coordinate [CaMn4O5] cluster. Residues 345 to 359 (AAESTPVALQAPAIG) constitute a propeptide that is removed on maturation.

The protein belongs to the reaction center PufL/M/PsbA/D family. In terms of assembly, PSII is composed of 1 copy each of membrane proteins PsbA, PsbB, PsbC, PsbD, PsbE, PsbF, PsbH, PsbI, PsbJ, PsbK, PsbL, PsbM, PsbT, PsbX, PsbY, PsbZ, Psb30/Ycf12, peripheral proteins PsbO, CyanoQ (PsbQ), PsbU, PsbV and a large number of cofactors. It forms dimeric complexes. The D1/D2 heterodimer binds P680, chlorophylls that are the primary electron donor of PSII, and subsequent electron acceptors. It shares a non-heme iron and each subunit binds pheophytin, quinone, additional chlorophylls, carotenoids and lipids. D1 provides most of the ligands for the Mn4-Ca-O5 cluster of the oxygen-evolving complex (OEC). There is also a Cl(-1) ion associated with D1 and D2, which is required for oxygen evolution. The PSII complex binds additional chlorophylls, carotenoids and specific lipids. is required as a cofactor. Tyr-161 forms a radical intermediate that is referred to as redox-active TyrZ, YZ or Y-Z. Post-translationally, C-terminally processed by CtpA; processing is essential to allow assembly of the oxygen-evolving complex and thus photosynthetic growth.

It is found in the cellular thylakoid membrane. The enzyme catalyses 2 a plastoquinone + 4 hnu + 2 H2O = 2 a plastoquinol + O2. Its function is as follows. Photosystem II (PSII) is a light-driven water:plastoquinone oxidoreductase that uses light energy to abstract electrons from H(2)O, generating O(2) and a proton gradient subsequently used for ATP formation. It consists of a core antenna complex that captures photons, and an electron transfer chain that converts photonic excitation into a charge separation. The D1/D2 (PsbA/PsbD) reaction center heterodimer binds P680, the primary electron donor of PSII as well as several subsequent electron acceptors. The chain is Photosystem II protein D1 1 from Parasynechococcus marenigrum (strain WH8102).